Here is a 911-residue protein sequence, read N- to C-terminus: DNA ligase 4 (911 aa).

Residues E271, T272, K273, L274, R278, E331, K345, F367, E427, K432, K449, and K451 each coordinate ATP. K273 (N6-AMP-lysine intermediate) is an active-site residue. E331 is a Mg(2+) binding site. E427 lines the Mg(2+) pocket. A required for catalytic activity region spans residues 610–620; the sequence is LATKHLHVGDD. BRCT domains lie at 654–743 and 808–911; these read KVSN…PRFM and SPLS…QYLL.

The protein belongs to the ATP-dependent DNA ligase family. Interacts with XRCC4; the LIG4-XRCC4 subcomplex has a 1:2 stoichiometry and XRCC4 is required for LIG4 stability. Component of the core long-range non-homologous end joining (NHEJ) complex (also named DNA-PK complex) composed of PRKDC, LIG4, XRCC4, XRCC6/Ku70, XRCC5/Ku86 and NHEJ1/XLF. Additional component of the NHEJ complex includes PAXX. Following autophosphorylation, PRKDC dissociates from DNA, leading to formation of the short-range NHEJ complex, composed of LIG4, XRCC4, XRCC6/Ku70, XRCC5/Ku86 and NHEJ1/XLF. Interacts with DCLRE1C; the interaction is direct. Interacts with APLF. It depends on Mg(2+) as a cofactor.

It is found in the nucleus. The catalysed reaction is ATP + (deoxyribonucleotide)n-3'-hydroxyl + 5'-phospho-(deoxyribonucleotide)m = (deoxyribonucleotide)n+m + AMP + diphosphate.. Its function is as follows. DNA ligase involved in DNA non-homologous end joining (NHEJ); required for double-strand break (DSB) repair and V(D)J recombination. Catalyzes the NHEJ ligation step of the broken DNA during DSB repair by resealing the DNA breaks after the gap filling is completed. Joins single-strand breaks in a double-stranded polydeoxynucleotide in an ATP-dependent reaction. LIG4 is mechanistically flexible: it can ligate nicks as well as compatible DNA overhangs alone, while in the presence of XRCC4, it can ligate ends with 2-nucleotides (nt) microhomology and 1-nt gaps. Forms a subcomplex with XRCC4; the LIG4-XRCC4 subcomplex is responsible for the NHEJ ligation step and XRCC4 enhances the joining activity of LIG4. Binding of the LIG4-XRCC4 complex to DNA ends is dependent on the assembly of the DNA-dependent protein kinase complex DNA-PK to these DNA ends. LIG4 regulates nuclear localization of XRCC4. The polypeptide is DNA ligase 4 (Mus musculus (Mouse)).